An 85-amino-acid polypeptide reads, in one-letter code: Small ribosomal subunit protein uS17 (85 aa).

Belongs to the universal ribosomal protein uS17 family. As to quaternary structure, part of the 30S ribosomal subunit.

Its function is as follows. One of the primary rRNA binding proteins, it binds specifically to the 5'-end of 16S ribosomal RNA. The polypeptide is Small ribosomal subunit protein uS17 (Desulfosudis oleivorans (strain DSM 6200 / JCM 39069 / Hxd3) (Desulfococcus oleovorans)).